A 216-amino-acid polypeptide reads, in one-letter code: Large ribosomal subunit protein uL1 (216 aa).

It belongs to the universal ribosomal protein uL1 family.

The polypeptide is Large ribosomal subunit protein uL1 (Oryza sativa subsp. indica (Rice)).